The sequence spans 485 residues: Aspartyl/glutamyl-tRNA(Asn/Gln) amidotransferase subunit B (485 aa).

Belongs to the GatB/GatE family. GatB subfamily. Heterotrimer of A, B and C subunits.

The catalysed reaction is L-glutamyl-tRNA(Gln) + L-glutamine + ATP + H2O = L-glutaminyl-tRNA(Gln) + L-glutamate + ADP + phosphate + H(+). It carries out the reaction L-aspartyl-tRNA(Asn) + L-glutamine + ATP + H2O = L-asparaginyl-tRNA(Asn) + L-glutamate + ADP + phosphate + 2 H(+). Functionally, allows the formation of correctly charged Asn-tRNA(Asn) or Gln-tRNA(Gln) through the transamidation of misacylated Asp-tRNA(Asn) or Glu-tRNA(Gln) in organisms which lack either or both of asparaginyl-tRNA or glutaminyl-tRNA synthetases. The reaction takes place in the presence of glutamine and ATP through an activated phospho-Asp-tRNA(Asn) or phospho-Glu-tRNA(Gln). The protein is Aspartyl/glutamyl-tRNA(Asn/Gln) amidotransferase subunit B of Gluconobacter oxydans (strain 621H) (Gluconobacter suboxydans).